A 43-amino-acid polypeptide reads, in one-letter code: Protein PsbN (43 aa).

The chain crosses the membrane as a helical span at residues 5-27; sequence TLVAIFISCSLVSFTGYALYTAF.

This sequence belongs to the PsbN family.

It is found in the plastid. Its subcellular location is the chloroplast thylakoid membrane. In terms of biological role, may play a role in photosystem I and II biogenesis. The sequence is that of Protein PsbN from Exsertotheca crispa (Moss).